Consider the following 248-residue polypeptide: Aspartate/glutamate leucyltransferase (248 aa).

The protein belongs to the R-transferase family. Bpt subfamily.

Its subcellular location is the cytoplasm. The catalysed reaction is N-terminal L-glutamyl-[protein] + L-leucyl-tRNA(Leu) = N-terminal L-leucyl-L-glutamyl-[protein] + tRNA(Leu) + H(+). The enzyme catalyses N-terminal L-aspartyl-[protein] + L-leucyl-tRNA(Leu) = N-terminal L-leucyl-L-aspartyl-[protein] + tRNA(Leu) + H(+). Functionally, functions in the N-end rule pathway of protein degradation where it conjugates Leu from its aminoacyl-tRNA to the N-termini of proteins containing an N-terminal aspartate or glutamate. The chain is Aspartate/glutamate leucyltransferase from Methylobacillus flagellatus (strain ATCC 51484 / DSM 6875 / VKM B-1610 / KT).